Consider the following 192-residue polypeptide: Molybdenum cofactor guanylyltransferase (192 aa).

GTP is bound by residues Lys-21, Asp-67, and Asp-101. Asp-101 is a Mg(2+) binding site.

It belongs to the MobA family. In terms of assembly, monomer. Requires Mg(2+) as cofactor.

It is found in the cytoplasm. The catalysed reaction is Mo-molybdopterin + GTP + H(+) = Mo-molybdopterin guanine dinucleotide + diphosphate. Functionally, transfers a GMP moiety from GTP to Mo-molybdopterin (Mo-MPT) cofactor (Moco or molybdenum cofactor) to form Mo-molybdopterin guanine dinucleotide (Mo-MGD) cofactor. This chain is Molybdenum cofactor guanylyltransferase, found in Neisseria meningitidis serogroup C / serotype 2a (strain ATCC 700532 / DSM 15464 / FAM18).